A 280-amino-acid polypeptide reads, in one-letter code: 4-diphosphocytidyl-2-C-methyl-D-erythritol kinase (280 aa).

Lys-11 is a catalytic residue. 95–105 (PVGAGLGGGSS) is a binding site for ATP. Asp-137 is an active-site residue.

Belongs to the GHMP kinase family. IspE subfamily.

The enzyme catalyses 4-CDP-2-C-methyl-D-erythritol + ATP = 4-CDP-2-C-methyl-D-erythritol 2-phosphate + ADP + H(+). The protein operates within isoprenoid biosynthesis; isopentenyl diphosphate biosynthesis via DXP pathway; isopentenyl diphosphate from 1-deoxy-D-xylulose 5-phosphate: step 3/6. Its function is as follows. Catalyzes the phosphorylation of the position 2 hydroxy group of 4-diphosphocytidyl-2C-methyl-D-erythritol. The sequence is that of 4-diphosphocytidyl-2-C-methyl-D-erythritol kinase from Citrifermentans bemidjiense (strain ATCC BAA-1014 / DSM 16622 / JCM 12645 / Bem) (Geobacter bemidjiensis).